A 267-amino-acid polypeptide reads, in one-letter code: Hydroxyethylthiazole kinase (267 aa).

Met-49 lines the substrate pocket. The ATP site is built by Arg-124 and Thr-170. A substrate-binding site is contributed by Gly-197.

The protein belongs to the Thz kinase family. Mg(2+) serves as cofactor.

The catalysed reaction is 5-(2-hydroxyethyl)-4-methylthiazole + ATP = 4-methyl-5-(2-phosphooxyethyl)-thiazole + ADP + H(+). It participates in cofactor biosynthesis; thiamine diphosphate biosynthesis; 4-methyl-5-(2-phosphoethyl)-thiazole from 5-(2-hydroxyethyl)-4-methylthiazole: step 1/1. Its function is as follows. Catalyzes the phosphorylation of the hydroxyl group of 4-methyl-5-beta-hydroxyethylthiazole (THZ). The protein is Hydroxyethylthiazole kinase of Tolumonas auensis (strain DSM 9187 / NBRC 110442 / TA 4).